A 443-amino-acid chain; its full sequence is Protein SCAR (443 aa).

The segment at 1-96 is interaction with brk1 and abiA; that stretch reads MVLITRYLPS…DYHRNTSIDT (96 aa). Residues 166 to 201 adopt a coiled-coil conformation; it reads VAEQQKLHEEARQRKRERREARLKKKGEKNEVEVKK. Disordered stretches follow at residues 176-197 and 220-386; these read ARQR…KNEV and INIE…RSDL. Over residues 178 to 192 the composition is skewed to basic residues; the sequence is QRKRERREARLKKKG. Polar residues predominate over residues 221–252; that stretch reads NIESPHTSSPQIQHQSNNTATPQHTTQHFGTN. Low complexity-rich tracts occupy residues 263 to 277 and 285 to 305; these read SQSS…INSY and NTST…TGFN. A compositionally biased stretch (pro residues) spans 306–323; sequence TPPPPMSNNNNMPPPPPM. Over residues 324 to 338 the composition is skewed to polar residues; that stretch reads QQNGGAANNRLSVHN. The segment covering 346–365 has biased composition (pro residues); sequence PAPPPPPPPPSAPAPPPPPM. A WH2 domain is found at 382 to 399; sequence ARSDLLSSIMQGMALKPA.

This sequence belongs to the SCAR/WAVE family. As to quaternary structure, part of a Scar/WAVE complex containing brk1, scrA, abiA, pirA and napA. Interacts with brk1 and abiA.

The protein localises to the cytoplasm. It is found in the cytoskeleton. Its subcellular location is the cell projection. It localises to the pseudopodium tip. The protein resides in the filopodium tip. Involved in regulation of actin and microtubule organization. Regulates phagocytosis and macropinocytosis. This Dictyostelium discoideum (Social amoeba) protein is Protein SCAR (scrA).